Here is a 261-residue protein sequence, read N- to C-terminus: Ribonuclease HII (261 aa).

Positions 72–260 (AVICGIDEVG…IKSIVLEKLD (189 aa)) constitute an RNase H type-2 domain. The a divalent metal cation site is built by Asp78, Glu79, and Asp170.

The protein belongs to the RNase HII family. The cofactor is Mn(2+). Requires Mg(2+) as cofactor.

Its subcellular location is the cytoplasm. It catalyses the reaction Endonucleolytic cleavage to 5'-phosphomonoester.. Its function is as follows. Endonuclease that specifically degrades the RNA of RNA-DNA hybrids. This is Ribonuclease HII from Staphylococcus carnosus (strain TM300).